A 244-amino-acid chain; its full sequence is Carbonic anhydrase (244 aa).

The signal sequence occupies residues methionine 1–alanine 19. The 222-residue stretch at valine 23–histidine 244 folds into the Alpha-carbonic anhydrase domain. A disulfide bridge connects residues cysteine 46 and cysteine 199. Histidine 84 serves as the catalytic Proton acceptor. The Zn(2+) site is built by histidine 109, histidine 111, and histidine 128. Threonine 195–threonine 196 is a binding site for substrate.

It belongs to the alpha-carbonic anhydrase family. Zn(2+) is required as a cofactor.

It is found in the periplasm. The enzyme catalyses hydrogencarbonate + H(+) = CO2 + H2O. Functionally, reversible hydration of carbon dioxide. This chain is Carbonic anhydrase (cah), found in Pectobacterium atrosepticum (strain SCRI 1043 / ATCC BAA-672) (Erwinia carotovora subsp. atroseptica).